The primary structure comprises 386 residues: Methionine aminopeptidase 1 (386 aa).

Alanine 2 carries the N-acetylalanine modification. The C6H2-type zinc-finger motif lies at 6–59 (TRVCETDGCSSEAKLQCPTCIKLGIQGSYFCSQECFKGSWATHKLLHKKAKDEK). Zn(2+)-binding residues include cysteine 9, cysteine 14, cysteine 22, cysteine 25, cysteine 36, cysteine 40, histidine 48, and histidine 52. Histidine 203 serves as a coordination point for a protein. Positions 220, 231, and 294 each coordinate Zn(2+). Residue histidine 301 coordinates a protein. Positions 327 and 358 each coordinate Zn(2+).

The protein belongs to the peptidase M24A family. Methionine aminopeptidase type 1 subfamily. In terms of assembly, associates with the 60S ribosomal subunit of the 80S translational complex. Zn(2+) serves as cofactor. Co(2+) is required as a cofactor. It depends on Mn(2+) as a cofactor. The cofactor is Fe(2+).

Its subcellular location is the cytoplasm. It carries out the reaction Release of N-terminal amino acids, preferentially methionine, from peptides and arylamides.. Cotranslationally removes the N-terminal methionine from nascent proteins. The N-terminal methionine is often cleaved when the second residue in the primary sequence is small and uncharged (Met-Ala-, Cys, Gly, Pro, Ser, Thr, or Val). The protein is Methionine aminopeptidase 1 (METAP1) of Pongo abelii (Sumatran orangutan).